Consider the following 590-residue polypeptide: Probable metalloendopeptidase G1-type (590 aa).

Position 41 (His-41) interacts with Zn(2+). The active site involves Glu-44. His-45 provides a ligand contact to Zn(2+).

It belongs to the peptidase M44 family. Requires Zn(2+) as cofactor.

In terms of biological role, seems to be involved in viral proteins maturation by cleavage at Ala-Gly-|-Xaa motifs. The polypeptide is Probable metalloendopeptidase G1-type (Oryctolagus cuniculus (Rabbit)).